Consider the following 54-residue polypeptide: Ovomucoid (54 aa).

The Kazal-like domain maps to V4–C54. 3 disulfides stabilise this stretch: C6-C36, C14-C33, and C22-C54. An N-linked (GlcNAc...) asparagine glycan is attached at N43.

It is found in the secreted. This chain is Ovomucoid, found in Argusianus argus (Great argus).